Reading from the N-terminus, the 813-residue chain is Receptor-like protein 48 (813 aa).

An N-terminal signal peptide occupies residues 1–30; the sequence is MHSCSERRMMTVIWSLCLIFCLSNSILAIA. Residues 31–786 are Extracellular-facing; it reads KDLCLPDQRD…EDEEKEEKNQ (756 aa). N-linked (GlcNAc...) asparagine glycosylation is found at N69, N105, and N123. LRR repeat units lie at residues 111-134, 136-159, and 160-182; these read LQHLQSLELSSNNISGILPDSIGN, KYLRSLSFRTCHLFGKIPSSLGSL, and SYLTHLDLSYNDFTSEGPDSGGN. N-linked (GlcNAc...) asparagine glycosylation is found at N195 and N216. LRR repeat units lie at residues 196 to 219, 220 to 244, 245 to 260, 261 to 285, 288 to 310, 311 to 335, 336 to 359, 361 to 381, 382 to 405, 406 to 432, 434 to 450, 451 to 473, 475 to 498, 500 to 521, 523 to 544, 545 to 571, 572 to 595, 642 to 666, 667 to 690, 691 to 714, and 716 to 739; these read LSSVTWIDLGSNQLKGMLPSNMSS, LSKLVSFDISENSFSGSIPSSLFMI, PSLNFSGPLEIGNISS, HSELGYLYMGENNFNGPIPGSLSKL, LRDLSLSFWNTGRGIVDFSIFLH, LKSLCSLDLSYLNTRSMVDLSFFSH, LMSLDELDLSGINLKISSTLSFPS, TGTLILASCNIVEFPKFLENQ, TSLFYLDISANHIEGQVPEWLWRL, PTLSFVNIAQNSFSGELPMLPNSIYSF, ASDNQFSGEIPRTVCEL, VSLNTLVLSNNKFSGSIPRCFEN, KTISILHLRNNSLSGVFPKEIISE, LTSLDVGHNWLSGQLPKSLIKC, DLEFLNVEDNRINDKFPFWLRS, LSNLQILVLRSNEFYGPIFSLEDSLSF, PKLRIFDISENHFTGVLPSDYFAG, FTIYKTIDVSGNRLEGDIPESIGIL, KELIVLNMSNNAFTGHIPPSLSNL, SNLQSLDLSQNRLSGSIPPELGKL, and FLEWMNFSYNRLEGPIPQATQIQS. N-linked (GlcNAc...) asparagine glycosylation is found at N248 and N257. A glycan (N-linked (GlcNAc...) asparagine) is linked at N380. The N-linked (GlcNAc...) asparagine glycan is linked to N484. N-linked (GlcNAc...) asparagine glycosylation is found at N673 and N689. N-linked (GlcNAc...) asparagine glycosylation is found at N721 and N741. Residues 756–785 form a disordered region; the sequence is FLNKCGGEEEEEEEATKQEEDEDEEKEEKN. The segment covering 763-781 has biased composition (acidic residues); sequence EEEEEEEATKQEEDEDEEK. A helical membrane pass occupies residues 787–807; sequence VFSWIAAAIGYVPGVFCGLTI. Over 808 to 813 the chain is Cytoplasmic; the sequence is AHILTS.

Belongs to the RLP family.

It localises to the cell membrane. In terms of biological role, plays a role in root hair development. This Arabidopsis thaliana (Mouse-ear cress) protein is Receptor-like protein 48.